Consider the following 562-residue polypeptide: NAD-dependent malic enzyme (562 aa).

Residue Tyr-101 is the Proton donor of the active site. Position 154 (Arg-154) interacts with NAD(+). Catalysis depends on Lys-172, which acts as the Proton acceptor. Residues Glu-243, Asp-244, and Asp-267 each coordinate a divalent metal cation. Positions 267 and 415 each coordinate NAD(+).

Belongs to the malic enzymes family. As to quaternary structure, homotetramer. It depends on Mg(2+) as a cofactor. Mn(2+) is required as a cofactor.

The enzyme catalyses (S)-malate + NAD(+) = pyruvate + CO2 + NADH. It catalyses the reaction oxaloacetate + H(+) = pyruvate + CO2. The protein is NAD-dependent malic enzyme of Aliivibrio fischeri (strain MJ11) (Vibrio fischeri).